Here is a 703-residue protein sequence, read N- to C-terminus: Polyribonucleotide nucleotidyltransferase (703 aa).

The Mg(2+) site is built by D484 and D490. The KH domain maps to 551–610 (PTVTTLRVLPEKISVIIGPAGKNIKKIIEETGVKIDLDPTGLVKIYATSKIAAEKAIDMI). Positions 620 to 688 (GEVYLGKVTR…DQGRIKVSLK (69 aa)) constitute an S1 motif domain.

This sequence belongs to the polyribonucleotide nucleotidyltransferase family. Mg(2+) is required as a cofactor.

It localises to the cytoplasm. It catalyses the reaction RNA(n+1) + phosphate = RNA(n) + a ribonucleoside 5'-diphosphate. Functionally, involved in mRNA degradation. Catalyzes the phosphorolysis of single-stranded polyribonucleotides processively in the 3'- to 5'-direction. This chain is Polyribonucleotide nucleotidyltransferase, found in Sulfurihydrogenibium sp. (strain YO3AOP1).